We begin with the raw amino-acid sequence, 537 residues long: Membrane protein insertase YidC (537 aa).

A run of 4 helical transmembrane segments spans residues L5 to T25, G353 to L373, V418 to Y438, and M495 to I515.

Belongs to the OXA1/ALB3/YidC family. Type 1 subfamily. In terms of assembly, interacts with the Sec translocase complex via SecD. Specifically interacts with transmembrane segments of nascent integral membrane proteins during membrane integration.

The protein resides in the cell inner membrane. In terms of biological role, required for the insertion and/or proper folding and/or complex formation of integral membrane proteins into the membrane. Involved in integration of membrane proteins that insert both dependently and independently of the Sec translocase complex, as well as at least some lipoproteins. Aids folding of multispanning membrane proteins. The sequence is that of Membrane protein insertase YidC from Citrifermentans bemidjiense (strain ATCC BAA-1014 / DSM 16622 / JCM 12645 / Bem) (Geobacter bemidjiensis).